Here is a 393-residue protein sequence, read N- to C-terminus: NAD(P)H-quinone oxidoreductase subunit H, chloroplastic (393 aa).

Belongs to the complex I 49 kDa subunit family. NDH is composed of at least 16 different subunits, 5 of which are encoded in the nucleus.

Its subcellular location is the plastid. The protein localises to the chloroplast thylakoid membrane. The catalysed reaction is a plastoquinone + NADH + (n+1) H(+)(in) = a plastoquinol + NAD(+) + n H(+)(out). It catalyses the reaction a plastoquinone + NADPH + (n+1) H(+)(in) = a plastoquinol + NADP(+) + n H(+)(out). Functionally, NDH shuttles electrons from NAD(P)H:plastoquinone, via FMN and iron-sulfur (Fe-S) centers, to quinones in the photosynthetic chain and possibly in a chloroplast respiratory chain. The immediate electron acceptor for the enzyme in this species is believed to be plastoquinone. Couples the redox reaction to proton translocation, and thus conserves the redox energy in a proton gradient. This Olimarabidopsis pumila (Dwarf rocket) protein is NAD(P)H-quinone oxidoreductase subunit H, chloroplastic.